The sequence spans 503 residues: MRINPGEITKVLEEKIKSFEEKIDLEDTGKVIQVGDGIARVYGLNKVMVSELVEFVETGVKGVAFNLEEDNVGIIVLGEYKDIKEGHTVRRLKRIIEVPVGEELLGRVVNPLGEPLDGKGPINAKNFRPIEIKAPGVIYRKPVDTPLQTGIKAIDSMIPIGRGQRELIIGDRQTGKTAIAIDTIINQKGQGVYCIYVAIGQKKSAIARIIDKLRQYGALEYTTVVVASASDPATLQYIAPYAGCAMGEYFAYSGRDALVVYDDLSKHAVAYRQLSLLMRRPPGREAYPGDIFYLHSRLLERAVRLNDKLGGGSLTALPIVETQANDISAYIPTNVISITDGQIYLEPGLFYAGQRPAINVGLSVSRVGGAAQIKAMKQVAGMLRIELAQYRELETFAQFATELDPATRAQIVRGQRLMELLKQEQYSPMPVEEQVVVIFAGVRGYLDDLPVEAVRRFEKEFLRFMHEKHQDILDDIREKKELTPETEEKLKKAIEEFKAVFRV.

Position 170 to 177 (170 to 177 (GDRQTGKT)) interacts with ATP.

This sequence belongs to the ATPase alpha/beta chains family. In terms of assembly, F-type ATPases have 2 components, CF(1) - the catalytic core - and CF(0) - the membrane proton channel. CF(1) has five subunits: alpha(3), beta(3), gamma(1), delta(1), epsilon(1). CF(0) has three main subunits: a(1), b(2) and c(9-12). The alpha and beta chains form an alternating ring which encloses part of the gamma chain. CF(1) is attached to CF(0) by a central stalk formed by the gamma and epsilon chains, while a peripheral stalk is formed by the delta and b chains.

It localises to the cell inner membrane. The catalysed reaction is ATP + H2O + 4 H(+)(in) = ADP + phosphate + 5 H(+)(out). In terms of biological role, produces ATP from ADP in the presence of a proton gradient across the membrane. The alpha chain is a regulatory subunit. This Thermotoga neapolitana (strain ATCC 49049 / DSM 4359 / NBRC 107923 / NS-E) protein is ATP synthase subunit alpha.